A 180-amino-acid chain; its full sequence is uncharacterized protein (180 aa).

A signal peptide spans 1 to 22 (MKRSIIAAAVFSSFFMSAGVFA).

The protein belongs to the fimbrial protein family.

Functionally, part of the yehABCD fimbrial operon. Could contribute to adhesion to various surfaces in specific environmental niches. This is an uncharacterized protein from Escherichia coli (strain K12).